The primary structure comprises 252 residues: Probable transcriptional regulatory protein Lxx10750 (252 aa).

This sequence belongs to the TACO1 family.

It is found in the cytoplasm. The chain is Probable transcriptional regulatory protein Lxx10750 from Leifsonia xyli subsp. xyli (strain CTCB07).